Consider the following 32-residue polypeptide: SYGISSGCFGLKLDRIGTMSGLGCWRLLQDSP.

Residues Cys8 and Cys24 are joined by a disulfide bond.

The protein belongs to the natriuretic peptide family. Snake NP subfamily. In terms of tissue distribution, expressed by the venom gland.

The protein resides in the secreted. Functionally, snake venom natriuretic peptide that exhibits hypotensive and vasorelaxant effects. Produces a dose-dependent hypotension in rats, followed by significant increases in concentrations of markers of nitric oxide (NO) formation measured in the plasma and vasorelaxation in a thoracic aortic ring bath. The peptide may exert its hypotensive action, at least in part, through stimulation of NO production. The vasorelaxant effect is endothelium-dependent and does not appear to be mediated by the natriuretic peptide receptor-A, as its action is not modified by isatin (a potent NPR1 antagonist). May act by activating the natriuretic peptide receptor-B (NPR2). In Crotalus lutosus abyssus (Grand Canyon rattlesnake), this protein is Natriuretic peptide Coa_NP2.